We begin with the raw amino-acid sequence, 437 residues long: Vasoactive intestinal polypeptide receptor 2 (437 aa).

Positions 1–22 are cleaved as a signal peptide; it reads MRASVVLTCYCWLLVRVSSIHP. Residues 23–123 are Extracellular-facing; sequence ECRFHLEIQE…EDESKISFYI (101 aa). 3 disulfides stabilise this stretch: cysteine 37/cysteine 60, cysteine 51/cysteine 92, and cysteine 74/cysteine 108. Residues asparagine 57, asparagine 87, and asparagine 91 are each glycosylated (N-linked (GlcNAc...) asparagine). Residues 124-149 traverse the membrane as a helical segment; sequence LVKAIYTLGYSVSLMSLTTGSIIICL. At 150 to 157 the chain is on the cytoplasmic side; sequence FRKLHCTR. A helical membrane pass occupies residues 158 to 179; that stretch reads NYIHLNLFLSFMLRAISVLVKD. Topologically, residues 180 to 202 are extracellular; it reads SVLYSSSGLLRCHDQPASWVGCK. Cysteine 201 and cysteine 270 are oxidised to a cystine. The chain crosses the membrane as a helical span at residues 203-227; that stretch reads LSLVFFQYCIMANFYWLLVEGLYLH. At 228–238 the chain is on the cytoplasmic side; the sequence is TLLVAILPPSR. A helical membrane pass occupies residues 239–260; it reads CFLAYLLIGWGIPSVCIGAWTA. The Extracellular portion of the chain corresponds to 261 to 279; that stretch reads TRLSLEDTGCWDTNDHSIP. A helical membrane pass occupies residues 280-303; it reads WWVIRMPILISIVVNFALFISIVR. Topologically, residues 304 to 324 are cytoplasmic; the sequence is ILLQKLTSPDVGGNDQSQYKR. Residues 325-345 form a helical membrane-spanning segment; it reads LAKSTLLLIPLFGVHYMVFAA. The Extracellular segment spans residues 346–353; that stretch reads FPIGISST. A helical transmembrane segment spans residues 354 to 377; that stretch reads YQILFELCVGSFQGLVVAVLYCFL. The Cytoplasmic segment spans residues 378 to 437; the sequence is NSEVQCELKRRWRGLCLTQAGSRDYRLHSWSMSRNGSESALQIHRGSRTQSFLQSETSVI.

The protein belongs to the G-protein coupled receptor 2 family. Interacts with ADCYAP1/PACAP (via N-terminal extracellular domain); activated by PACAP27 and CAPAC38 neuropeptides. Interacts with VIP; the interaction results in VIPR1 activation. Expressed at high levels in the MIN6 cells, at moderate levels in pancreatic islets, insulin-secreting cells, lung, brain, stomach, and colon, and at low levels in the heart.

The protein localises to the cell membrane. Its function is as follows. G protein-coupled receptor activated by the neuropeptides vasoactive intestinal peptide (VIP) and pituitary adenylate cyclase-activating polypeptide (ADCYAP1/PACAP). Binds VIP and both PACAP27 and PACAP38 bioactive peptides with the order of ligand affinity of VIP = PACAP38 &gt; PACAP27. Ligand binding causes a conformation change that triggers signaling via guanine nucleotide-binding proteins (G proteins) and modulates the activity of downstream effectors. Activates cAMP-dependent pathway. May be coupled to phospholipase C. This chain is Vasoactive intestinal polypeptide receptor 2, found in Mus musculus (Mouse).